A 1388-amino-acid polypeptide reads, in one-letter code: ESX-5 secretion system protein EccC5 (1388 aa).

The next 2 membrane-spanning stretches (helical) occupy residues 38–58 (WLIVVGVVVVGLLGGMVAMVF) and 65–85 (FGGVGSIFPIFMMVGIMMMMF). 3 FtsK domains span residues 477–679 (GELL…GAAQ), 855–1049 (QPPW…EDAK), and 1158–1351 (LQPV…DPDE). ATP contacts are provided by residues 500 to 507 (GTTGSGKS), 873 to 880 (GAGGSGKT), and 1175 to 1182 (GRRECGRT).

Part of the ESX-5 / type VII secretion system (T7SS), which is composed of cytosolic and membrane components. The ESX-5 membrane complex is composed of EccB5, EccC5, EccD5 and EccE5.

The protein resides in the cell inner membrane. Its function is as follows. Part of the ESX-5 specialized secretion system, which is responsible for the secretion of EsxN and a number of PE_PGRS and PPE proteins. This component is essential for ESX-5 complex stability and secretion. This Mycobacterium marinum (strain ATCC BAA-535 / M) protein is ESX-5 secretion system protein EccC5.